The chain runs to 294 residues: Dof zinc finger protein DOF4.1 (294 aa).

Residues 68–122 (RNCPRCNSSNTKFCYYNNYSLAQPRYLCKSCRRYWTEGGSLRNVPVGGGSRKNKK) form a Dof-type zinc finger. Cys-70, Cys-73, Cys-95, and Cys-98 together coordinate Zn(2+). Disordered stretches follow at residues 109 to 178 (RNVP…DKRA) and 247 to 294 (MYPY…GPTW). 2 stretches are compositionally biased toward polar residues: residues 126-136 (PNSSTSSSTKN) and 157-173 (KTHQ…SSPM). Residues 251 to 273 (GDHEDRQQHHHVRHDDGNKKREG) are compositionally biased toward basic and acidic residues. The segment covering 284-294 (ILGGDSGGPTW) has biased composition (gly residues).

It localises to the nucleus. In terms of biological role, transcription factor that binds specifically to a 5'-AA[AG]G-3' consensus core sequence. This Arabidopsis thaliana (Mouse-ear cress) protein is Dof zinc finger protein DOF4.1 (DOF4.1).